A 620-amino-acid chain; its full sequence is Rhamnogalacturonan endolyase YesW (620 aa).

The N-terminal stretch at 1–37 is a signal peptide; that stretch reads MRRSCLMIRRRKRMFTAVTLLVLLVMGTSVCPVKAEG. The interval 133–152 is disordered; it reads LDKPAGGTTPKGESYTYSAN. Residue Asn-152 participates in substrate binding. Ca(2+) is bound by residues Asp-153, Asp-158, Asp-160, Asp-162, Gln-164, and Glu-166. Position 172 (Asp-172) interacts with substrate. 2 residues coordinate a carbohydrate: Asp-187 and Lys-207. Residues Asp-222, Asp-224, Asp-226, Lys-228, and Glu-230 each contribute to the Ca(2+) site. 2 residues coordinate a carbohydrate: Gly-238 and Arg-255. Ca(2+) is bound by residues His-363, Asp-369, Asp-371, Asp-373, Lys-375, Glu-377, Asp-386, His-387, His-399, Asp-401, Asp-407, Asp-409, Arg-412, Gly-414, Glu-416, and Glu-422. Arg-452 is a binding site for substrate. Asp-457, Asp-459, Tyr-462, Gly-464, Glu-466, Asp-496, Asp-498, Leu-500, and Glu-502 together coordinate Ca(2+). 532–534 is a binding site for substrate; that stretch reads NGT. Ca(2+)-binding residues include Asp-543, Leu-545, Asp-547, Arg-549, Glu-551, Asn-592, and Ala-594. Tyr-595 contacts substrate. Asn-596 provides a ligand contact to Ca(2+).

This sequence belongs to the polysaccharide lyase 11 family. Monomer. It depends on Ca(2+) as a cofactor. The cofactor is Mn(2+).

Its subcellular location is the secreted. The catalysed reaction is Endotype eliminative cleavage of L-alpha-rhamnopyranosyl-(1-&gt;4)-alpha-D-galactopyranosyluronic acid bonds of rhamnogalacturonan I domains in ramified hairy regions of pectin leaving L-rhamnopyranose at the reducing end and 4-deoxy-4,5-unsaturated D-galactopyranosyluronic acid at the non-reducing end.. Functionally, pectinolytic enzyme that degrades type I rhamnogalacturonan from plant cell walls and releases oligosaccharide products. Degrades rhamnogalacturonan, polygalacturonic acid, pectic acid and pectin. The polypeptide is Rhamnogalacturonan endolyase YesW (yesW) (Bacillus subtilis (strain 168)).